Reading from the N-terminus, the 313-residue chain is Pyrimidine-specific ribonucleoside hydrolase RihB (313 aa).

The active-site Proton acceptor is the Asp11. Ca(2+) contacts are provided by Asp11, Asp16, and Val124. Residues Gln227 and His239 each contribute to the substrate site. Position 240 (Asp240) interacts with Ca(2+).

The protein belongs to the IUNH family. RihB subfamily. Homotetramer. Ca(2+) is required as a cofactor.

The enzyme catalyses a pyrimidine ribonucleoside + H2O = a pyrimidine nucleobase + D-ribose. Hydrolyzes cytidine or uridine to ribose and cytosine or uracil, respectively. Has a clear preference for cytidine over uridine. Strictly specific for ribonucleosides. The chain is Pyrimidine-specific ribonucleoside hydrolase RihB from Escherichia coli (strain SMS-3-5 / SECEC).